Reading from the N-terminus, the 876-residue chain is Valine--tRNA ligase (876 aa).

Positions 44–54 (PNVTGKLHLGH) match the 'HIGH' region motif. Residues 520 to 524 (KMSKS) carry the 'KMSKS' region motif. Lys-523 contacts ATP. Residues 805-876 (LEGLIDMDKE…VKARIEQLKA (72 aa)) are a coiled coil.

It belongs to the class-I aminoacyl-tRNA synthetase family. ValS type 1 subfamily. As to quaternary structure, monomer.

The protein resides in the cytoplasm. It carries out the reaction tRNA(Val) + L-valine + ATP = L-valyl-tRNA(Val) + AMP + diphosphate. Its function is as follows. Catalyzes the attachment of valine to tRNA(Val). As ValRS can inadvertently accommodate and process structurally similar amino acids such as threonine, to avoid such errors, it has a 'posttransfer' editing activity that hydrolyzes mischarged Thr-tRNA(Val) in a tRNA-dependent manner. The chain is Valine--tRNA ligase from Staphylococcus aureus (strain JH1).